The sequence spans 313 residues: Porphobilinogen deaminase (313 aa).

Position 242 is an S-(dipyrrolylmethanemethyl)cysteine (cysteine 242).

It belongs to the HMBS family. As to quaternary structure, monomer. Requires dipyrromethane as cofactor.

The enzyme catalyses 4 porphobilinogen + H2O = hydroxymethylbilane + 4 NH4(+). It functions in the pathway porphyrin-containing compound metabolism; protoporphyrin-IX biosynthesis; coproporphyrinogen-III from 5-aminolevulinate: step 2/4. Functionally, tetrapolymerization of the monopyrrole PBG into the hydroxymethylbilane pre-uroporphyrinogen in several discrete steps. This chain is Porphobilinogen deaminase, found in Yersinia pseudotuberculosis serotype O:3 (strain YPIII).